Here is a 704-residue protein sequence, read N- to C-terminus: DNA ligase (704 aa).

NAD(+)-binding positions include 43–47 (DADYD), 92–93 (SL), and E124. K126 functions as the N6-AMP-lysine intermediate in the catalytic mechanism. Positions 147, 182, 298, and 322 each coordinate NAD(+). Residues C427, C430, C445, and C451 each coordinate Zn(2+). The region spanning 625–704 (PVASPVAGKI…DGWLRLIGDA (80 aa)) is the BRCT domain.

The protein belongs to the NAD-dependent DNA ligase family. LigA subfamily. The cofactor is Mg(2+). It depends on Mn(2+) as a cofactor.

It carries out the reaction NAD(+) + (deoxyribonucleotide)n-3'-hydroxyl + 5'-phospho-(deoxyribonucleotide)m = (deoxyribonucleotide)n+m + AMP + beta-nicotinamide D-nucleotide.. DNA ligase that catalyzes the formation of phosphodiester linkages between 5'-phosphoryl and 3'-hydroxyl groups in double-stranded DNA using NAD as a coenzyme and as the energy source for the reaction. It is essential for DNA replication and repair of damaged DNA. In Cereibacter sphaeroides (strain ATCC 17029 / ATH 2.4.9) (Rhodobacter sphaeroides), this protein is DNA ligase.